Reading from the N-terminus, the 97-residue chain is MDVFLGIGIALAGYFIGEGLKQRNQTKGNEQNDIFLIKERDIYFYIGLFLGITTTEAKQLAGDMADLPYIEINGKKYVQKHMLKDWTFTLVEKHQGE.

This is an uncharacterized protein from Bacillus subtilis (strain 168).